Here is a 482-residue protein sequence, read N- to C-terminus: GTPase Obg (482 aa).

The region spanning 2–159 (PRFIDRVVVH…RELTLELKTV (158 aa)) is the Obg domain. The OBG-type G domain occupies 160-341 (ADVGLVGFPS…LIFALWDMVA (182 aa)). GTP is bound by residues 166-173 (GFPSAGKS), 191-195 (FTTLA), 212-215 (DVPG), 292-295 (NKID), and 322-324 (STV). The Mg(2+) site is built by S173 and T193. Residues 359–437 (PIPVDETAFS…IGDMTFDWEP (79 aa)) form the OCT domain. The segment at 450–482 (RGTDVRLEQTDRVGADERKAARKARRQSDDGEE) is disordered. Residues 452–468 (TDVRLEQTDRVGADERK) show a composition bias toward basic and acidic residues.

The protein belongs to the TRAFAC class OBG-HflX-like GTPase superfamily. OBG GTPase family. In terms of assembly, monomer. It depends on Mg(2+) as a cofactor.

It is found in the cytoplasm. Functionally, an essential GTPase which binds GTP, GDP and possibly (p)ppGpp with moderate affinity, with high nucleotide exchange rates and a fairly low GTP hydrolysis rate. Plays a role in control of the cell cycle, stress response, ribosome biogenesis and in those bacteria that undergo differentiation, in morphogenesis control. This is GTPase Obg from Mycolicibacterium gilvum (strain PYR-GCK) (Mycobacterium gilvum (strain PYR-GCK)).